The sequence spans 156 residues: Phosphopantetheine adenylyltransferase (156 aa).

Residue Thr10 participates in substrate binding. ATP-binding positions include 10–11 and His18; that span reads TF. Lys42, Leu74, and Arg88 together coordinate substrate. ATP is bound by residues 89-91, Glu99, and 124-130; these read GLR and NAFISSS.

This sequence belongs to the bacterial CoaD family. Homohexamer. Mg(2+) serves as cofactor.

It is found in the cytoplasm. It carries out the reaction (R)-4'-phosphopantetheine + ATP + H(+) = 3'-dephospho-CoA + diphosphate. It participates in cofactor biosynthesis; coenzyme A biosynthesis; CoA from (R)-pantothenate: step 4/5. Its function is as follows. Reversibly transfers an adenylyl group from ATP to 4'-phosphopantetheine, yielding dephospho-CoA (dPCoA) and pyrophosphate. This Campylobacter curvus (strain 525.92) protein is Phosphopantetheine adenylyltransferase.